We begin with the raw amino-acid sequence, 464 residues long: Protein FAM90A10 (464 aa).

Disordered regions lie at residues 1-42 (MMAR…DPRL), 69-373 (VPAT…LPTA), and 415-437 (HSPEKPGAFLAQSPHVSEKSEAP). 2 stretches are compositionally biased toward basic and acidic residues: residues 74-89 (GKKEGKENLKPWKPRG) and 97-114 (NKDKGEKEERPRQQDPQR). Residues 180-197 (LASLSPLRKASLSSSSSL) show a composition bias toward low complexity.

This sequence belongs to the FAM90 family.

In Homo sapiens (Human), this protein is Protein FAM90A10 (FAM90A10).